The sequence spans 508 residues: Pyruvate kinase (508 aa).

Residue R56 coordinates substrate. Residues N58, S60, D90, and T91 each contribute to the K(+) site. 58-61 (NFSH) is a binding site for ATP. Residues R97 and K185 each contribute to the ATP site. A Mg(2+)-binding site is contributed by E251. 3 residues coordinate substrate: G274, D275, and T307. A Mg(2+)-binding site is contributed by D275.

This sequence belongs to the pyruvate kinase family. Homotetramer. The cofactor is Mg(2+). Requires K(+) as cofactor.

It carries out the reaction pyruvate + ATP = phosphoenolpyruvate + ADP + H(+). Its pathway is carbohydrate degradation; glycolysis; pyruvate from D-glyceraldehyde 3-phosphate: step 5/5. Regulated by phosphoenolpyruvate substrate and is allosterically activated by ribose-5-phosphate, AMP and other nucleoside monophosphates but not by fructose-1,6-bisphosphate. The polypeptide is Pyruvate kinase (pyk) (Mycoplasma pneumoniae (strain ATCC 29342 / M129 / Subtype 1) (Mycoplasmoides pneumoniae)).